Here is a 274-residue protein sequence, read N- to C-terminus: Merozoite surface protein 2 (274 aa).

The signal sequence occupies residues 1–20 (MKVIKTLSIINFFIFVTFNI). N-linked (GlcNAc...) asparagine glycans are attached at residues N22 and N36. A disordered region spans residues 43 to 234 (MAESKPPTGT…SDSQKECTDG (192 aa)). Residues 44–200 (AESKPPTGTG…EQTESPELQS (157 aa)) are polymorphic region. A run of 2 repeats spans residues 53–62 (GASGSAGSGA) and 63–72 (GASGSAGSGD). The segment at 53-72 (GASGSAGSGAGASGSAGSGD) is 2 X 10 AA tandem repeats of G-A-S-G-S-A-G-S-G-[AD]. The span at 53-72 (GASGSAGSGAGASGSAGSGD) shows a compositional bias: gly residues. The span at 91 to 121 (SSSTPATTTTTTTTTTTTTTNDAEASTSTSS) shows a compositional bias: low complexity. 3 stretches are compositionally biased toward polar residues: residues 122–131 (ENPNHNNAET), 140–167 (QKSNQANKETQNNSNVQQDSQTKSNVPP), and 174–202 (KSPTAQPEQAENSAPTAEQTESPELQSAP). The N-linked (GlcNAc...) asparagine glycan is linked to N151. A glycan (N-linked (GlcNAc...) asparagine) is linked at N223. A disulfide bridge connects residues C231 and C239. N248 carries an N-linked (GlcNAc...) asparagine glycan. Residue N248 is the site of GPI-anchor amidated asparagine attachment. Positions 249–274 (SSNIASINKFVVLISAKLVLSFAIFI) are cleaved as a propeptide — removed in mature form.

It is found in the cell membrane. May play a role in the merozoite attachment to the erythrocyte. The polypeptide is Merozoite surface protein 2 (Plasmodium falciparum (isolate kf1916)).